Consider the following 266-residue polypeptide: Killer cell lectin-like receptor 5 (266 aa).

Residues 1–44 lie on the Cytoplasmic side of the membrane; sequence MSEPEVTYSTVRLHKSSGLQRLVSHEEIQGPGEAGYRKCSVPWQ. Residues 45-66 form a helical; Signal-anchor for type II membrane protein membrane-spanning segment; the sequence is LTVRSLGIFCFLLLVTVAVLAV. Residues 67-266 are Extracellular-facing; it reads KIFQYSQHKQ…CGKKLDHFPG (200 aa). N87 and N104 each carry an N-linked (GlcNAc...) asparagine glycan. Residues 143–261 enclose the C-type lectin domain; that stretch reads GVKHWFCYGT…SYFCICGKKL (119 aa). 4 disulfide bridges follow: C149–C154, C167–C255, C171–C257, and C236–C249. A glycan (N-linked (GlcNAc...) asparagine) is linked at N250.

In terms of assembly, homodimer; disulfide-linked. In terms of tissue distribution, mostly expressed in NK cells, but also observed on NK T and memory T-cells.

Its subcellular location is the membrane. Functionally, receptor on natural killer (NK) cells for class I MHC. This is Killer cell lectin-like receptor 5 (Klra5) from Mus musculus (Mouse).